The following is a 440-amino-acid chain: Xaa-Pro dipeptidase (440 aa).

Mn(2+)-binding residues include aspartate 244, aspartate 255, histidine 335, glutamate 380, and glutamate 419.

It belongs to the peptidase M24B family. Bacterial-type prolidase subfamily. The cofactor is Mn(2+).

The catalysed reaction is Xaa-L-Pro dipeptide + H2O = an L-alpha-amino acid + L-proline. Its function is as follows. Splits dipeptides with a prolyl residue in the C-terminal position. In Shewanella putrefaciens (strain CN-32 / ATCC BAA-453), this protein is Xaa-Pro dipeptidase.